The following is a 503-amino-acid chain: Maturase K (503 aa).

The protein belongs to the intron maturase 2 family. MatK subfamily.

Its subcellular location is the plastid. It localises to the chloroplast. Usually encoded in the trnK tRNA gene intron. Probably assists in splicing its own and other chloroplast group II introns. This Liquidambar orientalis (Oriental sweet gum) protein is Maturase K.